Here is a 793-residue protein sequence, read N- to C-terminus: Wall-associated receptor kinase-like 18 (793 aa).

Residues 1-28 (MSNESTNCSFFLNLFMLLLLLIFYSADA) form the signal peptide. The Extracellular segment spans residues 29-378 (CQRECGGISI…YRCVRDKTKA (350 aa)). N60, N130, N170, N238, N285, and N304 each carry an N-linked (GlcNAc...) asparagine glycan. Residues 312-371 (CTCGRITISETSYANCGCTYGYTGNPYVLNGCKDIDECKVKFEYCGKTETCVNFEGGYRC) are atypical EGF-like. 3 disulfides stabilise this stretch: C314–C327, C349–C362, and C356–C371. The chain crosses the membrane as a helical span at residues 379 to 399 (IMIGAGTGFGVLVLVGGLWWL). At 400–793 (RKFLIKRRIT…VEPLFPRLTW (394 aa)) the chain is on the cytoplasmic side. Residues 453 to 728 (FSENRVLGHG…REVFTELERI (276 aa)) enclose the Protein kinase domain. ATP contacts are provided by residues 459–467 (LGHGGQGTV) and K481. Y526 is modified (phosphotyrosine). The Proton acceptor role is filled by D579. 2 positions are modified to phosphothreonine: T613 and T618. Position 626 is a phosphotyrosine (Y626). The segment at 733–757 (EDSQVHNRIDEEEEEEEEEEEVVTT) is disordered. The span at 742-754 (DEEEEEEEEEEEV) shows a compositional bias: acidic residues.

It belongs to the protein kinase superfamily. Ser/Thr protein kinase family.

It is found in the membrane. It carries out the reaction L-seryl-[protein] + ATP = O-phospho-L-seryl-[protein] + ADP + H(+). The enzyme catalyses L-threonyl-[protein] + ATP = O-phospho-L-threonyl-[protein] + ADP + H(+). In terms of biological role, serine/threonine-protein kinase that may function as a signaling receptor of extracellular matrix component. The sequence is that of Wall-associated receptor kinase-like 18 (WAKL18) from Arabidopsis thaliana (Mouse-ear cress).